Reading from the N-terminus, the 245-residue chain is DNA repair protein RecO (245 aa).

This sequence belongs to the RecO family.

Involved in DNA repair and RecF pathway recombination. The chain is DNA repair protein RecO from Chromobacterium violaceum (strain ATCC 12472 / DSM 30191 / JCM 1249 / CCUG 213 / NBRC 12614 / NCIMB 9131 / NCTC 9757 / MK).